The following is an 801-amino-acid chain: Probable inorganic carbon transporter subunit DabA (801 aa).

Zn(2+) contacts are provided by C332, D334, H500, and C515.

This sequence belongs to the inorganic carbon transporter (TC 9.A.2) DabA family. Forms a complex with DabB. It depends on Zn(2+) as a cofactor.

It localises to the cell inner membrane. Functionally, part of an energy-coupled inorganic carbon pump. The protein is Probable inorganic carbon transporter subunit DabA of Marinobacter nauticus (strain ATCC 700491 / DSM 11845 / VT8) (Marinobacter aquaeolei).